Consider the following 147-residue polypeptide: Cytochrome c' (147 aa).

The signal sequence occupies residues methionine 1–alanine 21. Heme c is bound by residues arginine 31, threonine 87, glutamate 88, cysteine 137, cysteine 140, and histidine 141.

Homodimer. In terms of processing, binds 1 heme c group covalently per subunit.

In terms of biological role, cytochrome c' is the most widely occurring bacterial c-type cytochrome. Cytochromes c' are high-spin proteins and the heme has no sixth ligand. Their exact function is not known. In Rhodospirillum rubrum (strain ATCC 11170 / ATH 1.1.1 / DSM 467 / LMG 4362 / NCIMB 8255 / S1), this protein is Cytochrome c'.